The primary structure comprises 569 residues: Urease subunit alpha (569 aa).

The Urease domain maps to 131–569 (GGIDSHIHFI…LPLAQRYFLF (439 aa)). Positions 136, 138, and 219 each coordinate Ni(2+). Lys219 is modified (N6-carboxylysine). His221 lines the substrate pocket. Ni(2+)-binding residues include His248 and His274. His322 (proton donor) is an active-site residue. Asp362 lines the Ni(2+) pocket.

This sequence belongs to the metallo-dependent hydrolases superfamily. Urease alpha subunit family. As to quaternary structure, heterotrimer of UreA (gamma), UreB (beta) and UreC (alpha) subunits. Three heterotrimers associate to form the active enzyme. Requires Ni cation as cofactor. In terms of processing, carboxylation allows a single lysine to coordinate two nickel ions.

The protein localises to the cytoplasm. It catalyses the reaction urea + 2 H2O + H(+) = hydrogencarbonate + 2 NH4(+). Its pathway is nitrogen metabolism; urea degradation; CO(2) and NH(3) from urea (urease route): step 1/1. The chain is Urease subunit alpha from Herpetosiphon aurantiacus (strain ATCC 23779 / DSM 785 / 114-95).